Reading from the N-terminus, the 544-residue chain is Lipid II flippase MurJ (544 aa).

14 helical membrane-spanning segments follow: residues 21–41 (ILGM…GGAL), 49–69 (YTLF…KFVS), 90–110 (VMLV…PMFA), 127–147 (VVYV…MSLV), 169–189 (IVRI…FNGG), 191–211 (VIAV…GLVV), 241–261 (MFFE…AIPL), 297–317 (LVMI…PTIT), 338–358 (TILF…GPTY), 375–395 (ILLW…NAAI), 404–424 (FAVV…VPLI), 431–451 (GAIL…FIMI), 471–491 (VLSA…GFFI), and 500–520 (AAIV…YCGY).

The protein belongs to the polysaccharide synthase family.

The protein resides in the cell membrane. The protein operates within cell wall biogenesis; peptidoglycan biosynthesis. Its function is as follows. Involved in peptidoglycan biosynthesis. Transports lipid-linked peptidoglycan precursors from the inner to the outer leaflet of the cytoplasmic membrane. Not essential for growth. The sequence is that of Lipid II flippase MurJ from Bacillus subtilis (strain 168).